Here is a 614-residue protein sequence, read N- to C-terminus: Putative binding protein BMEII0691 (614 aa).

The signal sequence occupies residues 1-28 (MNRFIAFFRSVFLIGLVATAFGALPARA).

This sequence belongs to the bacterial solute-binding protein 5 family.

Its subcellular location is the periplasm. In Brucella melitensis biotype 1 (strain ATCC 23456 / CCUG 17765 / NCTC 10094 / 16M), this protein is Putative binding protein BMEII0691.